The following is a 96-amino-acid chain: Aspartyl/glutamyl-tRNA(Asn/Gln) amidotransferase subunit C (96 aa).

This sequence belongs to the GatC family. In terms of assembly, heterotrimer of A, B and C subunits.

The enzyme catalyses L-glutamyl-tRNA(Gln) + L-glutamine + ATP + H2O = L-glutaminyl-tRNA(Gln) + L-glutamate + ADP + phosphate + H(+). It catalyses the reaction L-aspartyl-tRNA(Asn) + L-glutamine + ATP + H2O = L-asparaginyl-tRNA(Asn) + L-glutamate + ADP + phosphate + 2 H(+). In terms of biological role, allows the formation of correctly charged Asn-tRNA(Asn) or Gln-tRNA(Gln) through the transamidation of misacylated Asp-tRNA(Asn) or Glu-tRNA(Gln) in organisms which lack either or both of asparaginyl-tRNA or glutaminyl-tRNA synthetases. The reaction takes place in the presence of glutamine and ATP through an activated phospho-Asp-tRNA(Asn) or phospho-Glu-tRNA(Gln). This is Aspartyl/glutamyl-tRNA(Asn/Gln) amidotransferase subunit C from Deinococcus deserti (strain DSM 17065 / CIP 109153 / LMG 22923 / VCD115).